Here is a 523-residue protein sequence, read N- to C-terminus: UDP-N-acetylmuramyl-tripeptide synthetase (523 aa).

Ser-38 contacts UDP-N-acetyl-alpha-D-muramoyl-L-alanyl-D-glutamate. Gly-116–Thr-122 is an ATP binding site. UDP-N-acetyl-alpha-D-muramoyl-L-alanyl-D-glutamate is bound by residues Thr-162–Thr-163, Ser-189, and Arg-197. Lys-231 is subject to N6-carboxylysine.

It belongs to the MurCDEF family. MurE subfamily. Post-translationally, carboxylation is probably crucial for Mg(2+) binding and, consequently, for the gamma-phosphate positioning of ATP.

Its subcellular location is the cytoplasm. Its pathway is cell wall biogenesis; peptidoglycan biosynthesis. In terms of biological role, catalyzes the addition of an amino acid to the nucleotide precursor UDP-N-acetylmuramoyl-L-alanyl-D-glutamate (UMAG) in the biosynthesis of bacterial cell-wall peptidoglycan. The polypeptide is UDP-N-acetylmuramyl-tripeptide synthetase (Lactobacillus acidophilus (strain ATCC 700396 / NCK56 / N2 / NCFM)).